Here is a 243-residue protein sequence, read N- to C-terminus: UPF0502 protein RALTA_B0914 (243 aa).

Positions 1 to 10 are enriched in polar residues; that stretch reads MPSTPESDPT. Residues 1–23 are disordered; sequence MPSTPESDPTQPGDRPARPALRP.

It belongs to the UPF0502 family.

The sequence is that of UPF0502 protein RALTA_B0914 from Cupriavidus taiwanensis (strain DSM 17343 / BCRC 17206 / CCUG 44338 / CIP 107171 / LMG 19424 / R1) (Ralstonia taiwanensis (strain LMG 19424)).